We begin with the raw amino-acid sequence, 446 residues long: Divalent metal cation transporter MntH (446 aa).

11 helical membrane-spanning segments follow: residues 32 to 52, 59 to 79, 107 to 127, 139 to 159, 168 to 188, 210 to 230, 264 to 284, 303 to 323, 355 to 375, 381 to 401, and 420 to 440; these read FSFL…GNWI, AQFG…AMLL, AFVF…AEVI, IPLL…LFIM, AIVG…VFIA, GALF…NLYL, SIAF…FFGV, PLLG…ALLA, LITR…FNSN, QLLV…LIPL, and VNII…YLII.

This sequence belongs to the NRAMP family.

The protein resides in the cell membrane. Its function is as follows. H(+)-stimulated, divalent metal cation uptake system. The sequence is that of Divalent metal cation transporter MntH from Staphylococcus saprophyticus subsp. saprophyticus (strain ATCC 15305 / DSM 20229 / NCIMB 8711 / NCTC 7292 / S-41).